The sequence spans 173 residues: RNA pyrophosphohydrolase (173 aa).

One can recognise a Nudix hydrolase domain in the interval 11–164 (PYRKCVGILV…KKHVYTQVVK (154 aa)). The Nudix box signature appears at 52 to 73 (GGINQGEKPIDAARRELYEETG).

This sequence belongs to the Nudix hydrolase family. RppH subfamily. A divalent metal cation is required as a cofactor.

In terms of biological role, accelerates the degradation of transcripts by removing pyrophosphate from the 5'-end of triphosphorylated RNA, leading to a more labile monophosphorylated state that can stimulate subsequent ribonuclease cleavage. This is RNA pyrophosphohydrolase from Bartonella clarridgeiae.